A 347-amino-acid chain; its full sequence is GTP 3',8-cyclase (347 aa).

Residues Arg-10–Glu-242 enclose the Radical SAM core domain. Arg-19 lines the GTP pocket. Positions 26 and 30 each coordinate [4Fe-4S] cluster. Tyr-32 contributes to the S-adenosyl-L-methionine binding site. A [4Fe-4S] cluster-binding site is contributed by Cys-33. Residue Arg-65 coordinates GTP. Gly-69 is a binding site for S-adenosyl-L-methionine. Thr-104 is a binding site for GTP. Ser-129 lines the S-adenosyl-L-methionine pocket. Residue Lys-178 participates in GTP binding. Met-212 lines the S-adenosyl-L-methionine pocket. [4Fe-4S] cluster is bound by residues Cys-275 and Cys-278. Arg-280–Arg-282 is a GTP binding site. Cys-292 provides a ligand contact to [4Fe-4S] cluster.

Belongs to the radical SAM superfamily. MoaA family. Monomer and homodimer. [4Fe-4S] cluster serves as cofactor.

The enzyme catalyses GTP + AH2 + S-adenosyl-L-methionine = (8S)-3',8-cyclo-7,8-dihydroguanosine 5'-triphosphate + 5'-deoxyadenosine + L-methionine + A + H(+). It functions in the pathway cofactor biosynthesis; molybdopterin biosynthesis. Catalyzes the cyclization of GTP to (8S)-3',8-cyclo-7,8-dihydroguanosine 5'-triphosphate. This is GTP 3',8-cyclase from Synechococcus sp. (strain CC9605).